A 179-amino-acid polypeptide reads, in one-letter code: Large ribosomal subunit protein uL6 (179 aa).

This sequence belongs to the universal ribosomal protein uL6 family. As to quaternary structure, part of the 50S ribosomal subunit.

In terms of biological role, this protein binds to the 23S rRNA, and is important in its secondary structure. It is located near the subunit interface in the base of the L7/L12 stalk, and near the tRNA binding site of the peptidyltransferase center. The protein is Large ribosomal subunit protein uL6 of Rhodococcus erythropolis (strain PR4 / NBRC 100887).